A 399-amino-acid chain; its full sequence is Nuclear hormone receptor family member nhr-125 (399 aa).

Positions 10 to 80 form a DNA-binding region, nuclear receptor; that stretch reads PFSCRICNQK…MGMDTTKFQY (71 aa). NR C4-type zinc fingers lie at residues 13-33 and 50-63; these read CRIC…CRAC and CQKG…CKRC. In terms of domain architecture, NR LBD spans 149 to 392; it reads QLENLTEGFK…EKLQKSQFSI (244 aa).

The protein belongs to the nuclear hormone receptor family.

It localises to the nucleus. Functionally, orphan nuclear receptor. This Caenorhabditis elegans protein is Nuclear hormone receptor family member nhr-125 (nhr-125).